Here is a 108-residue protein sequence, read N- to C-terminus: Probable endonuclease 4 (108 aa).

Zn(2+) contacts are provided by His-2, His-36, Asp-49, His-51, and Glu-81.

Belongs to the AP endonuclease 2 family. Zn(2+) serves as cofactor.

It carries out the reaction Endonucleolytic cleavage to 5'-phosphooligonucleotide end-products.. Functionally, endonuclease IV plays a role in DNA repair. It cleaves phosphodiester bonds at apurinic or apyrimidinic (AP) sites, generating a 3'-hydroxyl group and a 5'-terminal sugar phosphate. The protein is Probable endonuclease 4 (nfo) of Thermotoga neapolitana.